A 431-amino-acid polypeptide reads, in one-letter code: Maintenance of mitochondrial morphology protein 1 (431 aa).

Topologically, residues 1–103 are lumenal; sequence MVSALEVKSI…QLISWSFAQG (103 aa). Residues 104–124 traverse the membrane as a helical segment; that stretch reads LIIGQLSVVIFLIFFVKFFIF. Over 125-431 the chain is Cytoplasmic; the sequence is TDASSKMDNP…EDESSKTPHS (307 aa). The SMP-LTD domain occupies 192–404; sequence SAESLDWFNV…EPRFQSVKLP (213 aa). Residues 412-431 are disordered; that stretch reads NTREEVIHKTEDESSKTPHS.

This sequence belongs to the MMM1 family. In terms of assembly, homodimer. Component of the ER-mitochondria encounter structure (ERMES) or MDM complex, composed of MMM1, MDM10, MDM12 and MDM34. An MMM1 homodimer associates with one molecule of MDM12 on each side in a pairwise head-to-tail manner, and the SMP-LTD domains of MMM1 and MDM12 generate a continuous hydrophobic tunnel for phospholipid trafficking.

It is found in the endoplasmic reticulum membrane. In terms of biological role, component of the ERMES/MDM complex, which serves as a molecular tether to connect the endoplasmic reticulum (ER) and mitochondria. Components of this complex are involved in the control of mitochondrial shape and protein biogenesis, and function in nonvesicular lipid trafficking between the ER and mitochondria. The MDM12-MMM1 subcomplex functions in the major beta-barrel assembly pathway that is responsible for biogenesis of all outer membrane beta-barrel proteins, and acts in a late step after the SAM complex. The MDM10-MDM12-MMM1 subcomplex further acts in the TOM40-specific pathway after the action of the MDM12-MMM1 complex. Essential for establishing and maintaining the structure of mitochondria and maintenance of mtDNA nucleoids. The protein is Maintenance of mitochondrial morphology protein 1 of Candida glabrata (strain ATCC 2001 / BCRC 20586 / JCM 3761 / NBRC 0622 / NRRL Y-65 / CBS 138) (Yeast).